The chain runs to 544 residues: Spore germination protein KA (544 aa).

A disordered region spans residues 1–36 (MPLFSKRKNNTDSKDKQNTDERNQEQQQEKERPVLI). Basic and acidic residues predominate over residues 9 to 33 (NNTDSKDKQNTDERNQEQQQEKERP). Helical transmembrane passes span 279-299 (FAII…FVQF), 321-341 (VLVF…TTFH), 392-412 (AVSI…GIVS), 416-436 (VIIV…AMAI), and 443-463 (FIFI…GIIM). Over residues 504-523 (KRPESVSKEDKVRQGKDQRP) the composition is skewed to basic and acidic residues. The segment at 504–544 (KRPESVSKEDKVRQGKDQRPEPAASRGMVNKDLEEGDQNGT) is disordered.

This sequence belongs to the GerABKA family.

Its subcellular location is the cell membrane. In terms of biological role, involved in the germination response to the combination of glucose, fructose, L-asparagine, and KCl. In Bacillus subtilis (strain 168), this protein is Spore germination protein KA (gerKA).